We begin with the raw amino-acid sequence, 355 residues long: 3-isopropylmalate dehydrogenase (355 aa).

Positions 90, 100, 128, and 222 each coordinate substrate. 3 residues coordinate Mg(2+): aspartate 222, aspartate 246, and aspartate 250. 280-292 lines the NAD(+) pocket; that stretch reads GSAPDIAGKGIAN.

Belongs to the isocitrate and isopropylmalate dehydrogenases family. LeuB type 1 subfamily. In terms of assembly, homodimer. Mg(2+) is required as a cofactor. It depends on Mn(2+) as a cofactor.

The protein localises to the cytoplasm. It carries out the reaction (2R,3S)-3-isopropylmalate + NAD(+) = 4-methyl-2-oxopentanoate + CO2 + NADH. It participates in amino-acid biosynthesis; L-leucine biosynthesis; L-leucine from 3-methyl-2-oxobutanoate: step 3/4. In terms of biological role, catalyzes the oxidation of 3-carboxy-2-hydroxy-4-methylpentanoate (3-isopropylmalate) to 3-carboxy-4-methyl-2-oxopentanoate. The product decarboxylates to 4-methyl-2 oxopentanoate. The polypeptide is 3-isopropylmalate dehydrogenase (Burkholderia mallei (strain ATCC 23344)).